Consider the following 447-residue polypeptide: Tubulin beta-2 chain (447 aa).

Residues glutamine 11, glutamate 69, serine 138, glycine 142, threonine 143, glycine 144, asparagine 204, and asparagine 226 each contribute to the GTP site. Glutamate 69 is a binding site for Mg(2+). A compositionally biased stretch (polar residues) spans 419–428 (VSEYQQYQDA). Positions 419–447 (VSEYQQYQDATSDEEGEYEDEDQEPEEDM) are disordered. Residues 429 to 447 (TSDEEGEYEDEDQEPEEDM) are compositionally biased toward acidic residues.

The protein belongs to the tubulin family. In terms of assembly, dimer of alpha and beta chains. A typical microtubule is a hollow water-filled tube with an outer diameter of 25 nm and an inner diameter of 15 nM. Alpha-beta heterodimers associate head-to-tail to form protofilaments running lengthwise along the microtubule wall with the beta-tubulin subunit facing the microtubule plus end conferring a structural polarity. Microtubules usually have 13 protofilaments but different protofilament numbers can be found in some organisms and specialized cells. Requires Mg(2+) as cofactor.

Its subcellular location is the cytoplasm. The protein localises to the cytoskeleton. Tubulin is the major constituent of microtubules, a cylinder consisting of laterally associated linear protofilaments composed of alpha- and beta-tubulin heterodimers. Microtubules grow by the addition of GTP-tubulin dimers to the microtubule end, where a stabilizing cap forms. Below the cap, tubulin dimers are in GDP-bound state, owing to GTPase activity of alpha-tubulin. In Triticum aestivum (Wheat), this protein is Tubulin beta-2 chain (TUBB2).